Consider the following 415-residue polypeptide: Esterase FrsA (415 aa).

This sequence belongs to the FrsA family.

The enzyme catalyses a carboxylic ester + H2O = an alcohol + a carboxylate + H(+). Catalyzes the hydrolysis of esters. In Yersinia enterocolitica serotype O:8 / biotype 1B (strain NCTC 13174 / 8081), this protein is Esterase FrsA.